A 93-amino-acid chain; its full sequence is Pyrimidine/purine nucleoside phosphorylase (93 aa).

It belongs to the nucleoside phosphorylase PpnP family.

The catalysed reaction is a purine D-ribonucleoside + phosphate = a purine nucleobase + alpha-D-ribose 1-phosphate. It catalyses the reaction adenosine + phosphate = alpha-D-ribose 1-phosphate + adenine. It carries out the reaction cytidine + phosphate = cytosine + alpha-D-ribose 1-phosphate. The enzyme catalyses guanosine + phosphate = alpha-D-ribose 1-phosphate + guanine. The catalysed reaction is inosine + phosphate = alpha-D-ribose 1-phosphate + hypoxanthine. It catalyses the reaction thymidine + phosphate = 2-deoxy-alpha-D-ribose 1-phosphate + thymine. It carries out the reaction uridine + phosphate = alpha-D-ribose 1-phosphate + uracil. The enzyme catalyses xanthosine + phosphate = alpha-D-ribose 1-phosphate + xanthine. Catalyzes the phosphorolysis of diverse nucleosides, yielding D-ribose 1-phosphate and the respective free bases. Can use uridine, adenosine, guanosine, cytidine, thymidine, inosine and xanthosine as substrates. Also catalyzes the reverse reactions. The protein is Pyrimidine/purine nucleoside phosphorylase of Tolumonas auensis (strain DSM 9187 / NBRC 110442 / TA 4).